A 2453-amino-acid chain; its full sequence is Tyrosine-protein phosphatase non-receptor type 13 (2453 aa).

The 188-residue stretch at 3 to 190 folds into the KIND domain; the sequence is VSLAEALEVR…SGTDPLSRSS (188 aa). Positions 183–227 are disordered; sequence TDPLSRSSEQKPDRSQAIRDRLRGKGLPTGRSSTSDALDTHEAPL. A compositionally biased stretch (basic and acidic residues) spans 190–205; sequence SEQKPDRSQAIRDRLR. Position 240 is a phosphoserine (serine 240). The tract at residues 253-285 is disordered; sequence EDYLKDTPSDNNSRHEDSETFSSPYQFKTSTPQ. Basic and acidic residues predominate over residues 256-270; that stretch reads LKDTPSDNNSRHEDS. Polar residues predominate over residues 272–285; that stretch reads TFSSPYQFKTSTPQ. Residues serine 297 and serine 298 each carry the phosphoserine modification. Residues 429 to 457 are disordered; that stretch reads SEASKRFESSSGLPGVDETGQTRPSRQYE. The span at 447–457 shows a compositional bias: polar residues; it reads TGQTRPSRQYE. Residues 458–493 are a coiled coil; that stretch reads TSLEGNLINQDIMLRRQEEEMMQLQARMALRQSRLS. The region spanning 565–865 is the FERM domain; the sequence is RKVNIRLLSG…SQHKFQLQMR (301 aa). 5 positions are modified to phosphoserine: serine 883, serine 890, serine 901, serine 904, and serine 907. A compositionally biased stretch (basic and acidic residues) spans 944–957; sequence KEKTDKASWEEKPR. Disordered stretches follow at residues 944-966 and 1007-1063; these read KEKT…YHDL and LAGL…VPFK. A phosphoserine mark is found at serine 1021 and serine 1025. Residues 1025 to 1034 are compositionally biased toward basic and acidic residues; sequence SPERRNHESD. Residues 1049-1058 show a composition bias toward low complexity; sequence SLPSSGKSSS. Serine 1076 carries the phosphoserine modification. Residues 1084–1170 form the PDZ 1 domain; that stretch reads LVNLKKDPKH…DVTLVISQPK (87 aa). Disordered stretches follow at residues 1199–1356 and 1441–1478; these read DSAM…GDTF and GQVP…TPHV. Serine 1221 is subject to Phosphoserine. Composition is skewed to polar residues over residues 1242–1252 and 1267–1279; these read ESASLSQSQVN and PQHS…VTTK. Serine 1270 bears the Phosphoserine mark. The segment covering 1297-1315 has biased composition (basic and acidic residues); that stretch reads GISDLIEHLDCADSDKDDS. Residues 1331–1341 are compositionally biased toward low complexity; it reads SSSLSTSNKTS. A PDZ 2 domain is found at 1357-1442; that stretch reads EVELAKTDGS…VVHLLLEKGQ (86 aa). Residues 1467-1478 are compositionally biased toward basic and acidic residues; it reads APEKVAKQTPHV. The PDZ 3 domain maps to 1491–1579; sequence EVKLFKNSSG…EVSLLLCRPA (89 aa). Residues 1602 to 1629 show a composition bias toward polar residues; the sequence is LNSSKETSQPSSSVEQGASSDDNGVSGK. Disordered regions lie at residues 1602–1662 and 1695–1726; these read LNSS…AKMP and KLES…SDAT. Over residues 1638-1655 the composition is skewed to basic and acidic residues; it reads SRRESYSDHSESGEDDSV. PDZ domains lie at 1764 to 1845 and 1857 to 1942; these read LITL…GRIL and LPDI…TRDG. Disordered regions lie at residues 1991-2024 and 2051-2139; these read EAVC…DDIY and RHAT…DPPF. Over residues 2012–2021 the composition is skewed to basic and acidic residues; sequence ETKESNSRDD. In terms of domain architecture, Tyrosine-protein phosphatase spans 2180-2434; that stretch reads PSKELENLQE…VFCYQVILYV (255 aa). Substrate contacts are provided by residues aspartate 2345, 2375–2381, and glutamine 2419; that span reads CSAGIGR. Cysteine 2375 serves as the catalytic Phosphocysteine intermediate.

Belongs to the protein-tyrosine phosphatase family. Non-receptor class subfamily. Interacts (via the first PDZ domain) with PLEKHA1 and PLEKHA2. Interacts (via the second PDZ domain) with TNFRSF6 (Fas receptor) (via C-terminus). Interacts (via the second PDZ domain) with TRIP6 (via the third LIM domain and C-terminus). Interacts (via the third PDZ domain) with NGFR (via C-terminal SVP motif) and PKN2 (via C-terminus). Interacts (via the second or fourth PDZ domains) with PDLIM4 (via C-terminus only or via combined C-terminus and LIM domain, but not LIM domain only). Found in a complex with PDLIM4 and TRIP6. Interacts with PDLIM4; this interaction results in dephosphorylation of SRC 'Tyr-419' by this protein leading to its inactivation. Interacts with BRD7. Interacts with RAPGEF6. Interacts with ARHGAP29. Interacts with PIK3R2; dephosphorylates PIK3R2. Interacts with FBXL2. Interacts (via the FERM domain) with ENTR1. Found in a complex with ENTR1, PTPN13 and GIT1. In terms of tissue distribution, expressed predominantly in kidney and, to a lesser extent, in lung, heart, brain and testis.

Its subcellular location is the cytoplasm. The protein resides in the cytoskeleton. It localises to the nucleus. The protein localises to the cell projection. It is found in the lamellipodium. The enzyme catalyses O-phospho-L-tyrosyl-[protein] + H2O = L-tyrosyl-[protein] + phosphate. In terms of biological role, tyrosine phosphatase which negatively regulates FAS-induced apoptosis and NGFR-mediated pro-apoptotic signaling. May regulate phosphoinositide 3-kinase (PI3K) signaling through dephosphorylation of PIK3R2. This chain is Tyrosine-protein phosphatase non-receptor type 13 (Ptpn13), found in Mus musculus (Mouse).